A 641-amino-acid chain; its full sequence is Threonine--tRNA ligase (641 aa).

In terms of domain architecture, TGS spans 1–61 (MPIITLPDGT…TQNSHIQIIT (61 aa)). The catalytic stretch occupies residues 242–533 (DHRKLGKKYS…LIENYSGNFP (292 aa)). Residues cysteine 333, histidine 384, and histidine 510 each coordinate Zn(2+).

This sequence belongs to the class-II aminoacyl-tRNA synthetase family. Homodimer. Zn(2+) serves as cofactor.

The protein resides in the cytoplasm. It carries out the reaction tRNA(Thr) + L-threonine + ATP = L-threonyl-tRNA(Thr) + AMP + diphosphate + H(+). Its function is as follows. Catalyzes the attachment of threonine to tRNA(Thr) in a two-step reaction: L-threonine is first activated by ATP to form Thr-AMP and then transferred to the acceptor end of tRNA(Thr). Also edits incorrectly charged L-seryl-tRNA(Thr). The chain is Threonine--tRNA ligase from Prochlorococcus marinus (strain NATL2A).